The sequence spans 139 residues: Iron-sulfur cluster assembly 1 homolog, mitochondrial (139 aa).

Positions 52, 117, and 119 each coordinate Fe cation.

This sequence belongs to the HesB/IscA family.

It localises to the mitochondrion. Its function is as follows. Involved in the assembly of mitochondrial iron-sulfur proteins. Probably involved in the binding of an intermediate of Fe/S cluster assembly. The polypeptide is Iron-sulfur cluster assembly 1 homolog, mitochondrial (isca1) (Dictyostelium discoideum (Social amoeba)).